Here is a 185-residue protein sequence, read N- to C-terminus: DNA-directed RNA polymerase 22 kDa subunit (185 aa).

It belongs to the poxviridae DNA-directed RNA polymerase 22 kDa subunit family. In terms of assembly, the DNA-dependent RNA polymerase used for intermediate and late genes expression consists of eight subunits Rpo30/OPG66, Rpo7/OPG90, Rpo22/OPG103, Rpo147/OPG105, Rpo18/OPG119, Rpo19/OPG131, Rpo132/OPG151 and Rpo35/OPG156. The same holoenzyme, with the addition of the transcription-specificity factor OPG109, is used for early gene expression.

The protein localises to the virion. The catalysed reaction is RNA(n) + a ribonucleoside 5'-triphosphate = RNA(n+1) + diphosphate. In terms of biological role, part of the DNA-dependent RNA polymerase which catalyzes the transcription of viral DNA into RNA using the four ribonucleoside triphosphates as substrates. Responsible for the transcription of early, intermediate and late genes. DNA-dependent RNA polymerase associates with the early transcription factor (ETF), itself composed of OPG118 and OPG133, thereby allowing the early genes transcription. Late transcription, and probably also intermediate transcription, require newly synthesized RNA polymerase. This Cynomys gunnisoni (Gunnison's prairie dog) protein is DNA-directed RNA polymerase 22 kDa subunit (OPG103).